The following is a 563-amino-acid chain: MESLVRQSKKLCPYIGRTSASSLKQLGNGRLTQKAGQCPIMGKAMGVRGFKSDAGSNAESATVDVHAAVDTSKGTCPHAAQYSPVYPSSRLDNYPFGMTQRGLGKVPTQDAHNATTFNYESFYENKINAKHQDKSYRYFNNINRLAAEFPRAHRGSIEEDKVTVWCANDYLGMGRNPVVVDAMHETLDKYGAGAGGTRNIAGHNRHAVELEAAIADLHKKEAALVFSSCYVANDSTLSLLGQALPNCVYFSDASNHASMIHGIRHGGSEKVVWKHNDLADLEAKLARYPKSTPKVIAFESVYSMCGSIGPIEEICDLADKYGAITFLDEVHAVGMYGPTGAGVAEHLDFEHYHSGAQTQRQPIMDRVDIFTGTLGKAYGCVGGYIAGSAKFVDMVRSYAPGFIFTTTLPPATMAGARAAINYQKATMKDRVAQQTHTRYVKDKLANRGIPVVPNPSHIVPVLVGDAQKAKAASDLLLTKHQIYVQAINFPTVPIGQERLRVTPTPGHHEGLCDELVAALEDVWQELDLKRVEDWTAEGGLCGVGEGVEVEPLWSEEQLSYGRD.

The transit peptide at 1–18 (MESLVRQSKKLCPYIGRT) directs the protein to the mitochondrion. Substrate is bound by residues R137, S251, and K270. Pyridoxal 5'-phosphate-binding residues include S303, H331, and T373. K376 is an active-site residue. Residue K376 is modified to N6-(pyridoxal phosphate)lysine. Residues T405 and T406 each contribute to the pyridoxal 5'-phosphate site. Substrate is bound at residue T491.

Belongs to the class-II pyridoxal-phosphate-dependent aminotransferase family. Homodimer. Requires pyridoxal 5'-phosphate as cofactor.

Its subcellular location is the mitochondrion matrix. It carries out the reaction succinyl-CoA + glycine + H(+) = 5-aminolevulinate + CO2 + CoA. The protein operates within porphyrin-containing compound metabolism; protoporphyrin-IX biosynthesis; 5-aminolevulinate from glycine: step 1/1. Functionally, catalyzes the synthesis of 5-aminolevulinate (ALA) from succinyl-CoA and glycine, the first and rate-limiting step in heme biosynthesis. The protein is 5-aminolevulinate synthase, mitochondrial (HEM1) of Yarrowia lipolytica (strain CLIB 122 / E 150) (Yeast).